Consider the following 364-residue polypeptide: Methylthioribose-1-phosphate isomerase (364 aa).

Residue Asp246 is the Proton donor of the active site.

Belongs to the eIF-2B alpha/beta/delta subunits family. MtnA subfamily.

Its subcellular location is the cytoplasm. It is found in the nucleus. The enzyme catalyses 5-(methylsulfanyl)-alpha-D-ribose 1-phosphate = 5-(methylsulfanyl)-D-ribulose 1-phosphate. Its pathway is amino-acid biosynthesis; L-methionine biosynthesis via salvage pathway; L-methionine from S-methyl-5-thio-alpha-D-ribose 1-phosphate: step 1/6. Its function is as follows. Catalyzes the interconversion of methylthioribose-1-phosphate (MTR-1-P) into methylthioribulose-1-phosphate (MTRu-1-P). The protein is Methylthioribose-1-phosphate isomerase of Bombyx mori (Silk moth).